The primary structure comprises 362 residues: Molybdenum import ATP-binding protein ModC (362 aa).

Residues 2–236 enclose the ABC transporter domain; that stretch reads VSPIEVRLQM…LDLPLAMGDD (235 aa). 34 to 41 is a binding site for ATP; sequence GPSGSGKT. In terms of domain architecture, Mop spans 297–362; it reads HSSILNRLPV…AQIKAVAVLA (66 aa).

It belongs to the ABC transporter superfamily. Molybdate importer (TC 3.A.1.8) family. In terms of assembly, the complex is composed of two ATP-binding proteins (ModC), two transmembrane proteins (ModB) and a solute-binding protein (ModA).

Its subcellular location is the cell inner membrane. The catalysed reaction is molybdate(out) + ATP + H2O = molybdate(in) + ADP + phosphate + H(+). Functionally, part of the ABC transporter complex ModABC involved in molybdenum import. Responsible for energy coupling to the transport system. The protein is Molybdenum import ATP-binding protein ModC of Pseudomonas syringae pv. tomato (strain ATCC BAA-871 / DC3000).